A 98-amino-acid polypeptide reads, in one-letter code: Cell cycle protein GpsB (98 aa).

Positions 34–71 (LDIVIKDYEAFQQELDELRQENARLKRQVEELQKRPTT) form a coiled coil.

Belongs to the GpsB family. In terms of assembly, forms polymers through the coiled coil domains. Interacts with PBP1, MreC and EzrA.

It localises to the cytoplasm. Divisome component that associates with the complex late in its assembly, after the Z-ring is formed, and is dependent on DivIC and PBP2B for its recruitment to the divisome. Together with EzrA, is a key component of the system that regulates PBP1 localization during cell cycle progression. Its main role could be the removal of PBP1 from the cell pole after pole maturation is completed. Also contributes to the recruitment of PBP1 to the division complex. Not essential for septum formation. In Geobacillus thermodenitrificans (strain NG80-2), this protein is Cell cycle protein GpsB.